A 368-amino-acid chain; its full sequence is Homoserine O-acetyltransferase (368 aa).

One can recognise an AB hydrolase-1 domain in the interval 43–354 (NVVVVCHALT…DYGHDAFLVE (312 aa)). S148 functions as the Nucleophile in the catalytic mechanism. Residue R220 coordinates substrate. Catalysis depends on residues D314 and H348. Residue D349 participates in substrate binding.

The protein belongs to the AB hydrolase superfamily. MetX family. In terms of assembly, homodimer.

It is found in the cytoplasm. It catalyses the reaction L-homoserine + acetyl-CoA = O-acetyl-L-homoserine + CoA. It functions in the pathway amino-acid biosynthesis; L-methionine biosynthesis via de novo pathway; O-acetyl-L-homoserine from L-homoserine: step 1/1. Its function is as follows. Transfers an acetyl group from acetyl-CoA to L-homoserine, forming acetyl-L-homoserine. The sequence is that of Homoserine O-acetyltransferase from Sulfurimonas autotrophica (strain ATCC BAA-671 / DSM 16294 / JCM 11897 / OK10).